The primary structure comprises 90 residues: MNKTQLIDVIADKAELSKTQAKAALESTLAAITESLKEGDAVQLVGFGTFKVNHRAERTGRNPQTGKEIKIAAANVPAFVSGKALKDAVK.

It belongs to the bacterial histone-like protein family. Heterodimer of an alpha and a beta chain.

Its function is as follows. Histone-like DNA-binding protein which is capable of wrapping DNA to stabilize it, and thus to prevent its denaturation under extreme environmental conditions. This chain is DNA-binding protein HU-alpha (hupA), found in Salmonella typhi.